Here is a 369-residue protein sequence, read N- to C-terminus: Transmembrane protein 198 (369 aa).

A run of 7 helical transmembrane segments spans residues 37-57, 60-80, 93-113, 117-137, 148-168, 181-201, and 216-236; these read VVPS…CFFG, CFKA…IFLL, VEAS…VTML, VGLF…TLIG, SVWV…VLTL, VFGA…FALV, and VCWT…LGVL. Positions 266–308 are disordered; the sequence is RQKEERRESSRKKKRKQPQSAQHTHAAKALHPEPAYRRKPNPI.

It belongs to the TMEM198 family.

The protein localises to the membrane. The polypeptide is Transmembrane protein 198 (tmem198ab) (Danio rerio (Zebrafish)).